Consider the following 94-residue polypeptide: Pyrimidine/purine nucleoside phosphorylase (94 aa).

It belongs to the nucleoside phosphorylase PpnP family.

The catalysed reaction is a purine D-ribonucleoside + phosphate = a purine nucleobase + alpha-D-ribose 1-phosphate. It carries out the reaction adenosine + phosphate = alpha-D-ribose 1-phosphate + adenine. The enzyme catalyses cytidine + phosphate = cytosine + alpha-D-ribose 1-phosphate. It catalyses the reaction guanosine + phosphate = alpha-D-ribose 1-phosphate + guanine. The catalysed reaction is inosine + phosphate = alpha-D-ribose 1-phosphate + hypoxanthine. It carries out the reaction thymidine + phosphate = 2-deoxy-alpha-D-ribose 1-phosphate + thymine. The enzyme catalyses uridine + phosphate = alpha-D-ribose 1-phosphate + uracil. It catalyses the reaction xanthosine + phosphate = alpha-D-ribose 1-phosphate + xanthine. Catalyzes the phosphorolysis of diverse nucleosides, yielding D-ribose 1-phosphate and the respective free bases. Can use uridine, adenosine, guanosine, cytidine, thymidine, inosine and xanthosine as substrates. Also catalyzes the reverse reactions. The sequence is that of Pyrimidine/purine nucleoside phosphorylase from Shigella dysenteriae serotype 1 (strain Sd197).